Here is a 407-residue protein sequence, read N- to C-terminus: Phenazine 1,6-dicarboxylic acid hydroxylase PhzS (407 aa).

FAD-binding residues include Gly-17, Val-134, and Asp-313.

It depends on FAD as a cofactor.

The catalysed reaction is phenazine-1,6-dicarboxylate + NADH + O2 + 2 H(+) = 6-hydroxyphenazine-1-carboxylate + CO2 + NAD(+) + H2O. It catalyses the reaction 6-hydroxyphenazine-1-carboxylate + NADH + O2 + 2 H(+) = 1,6-dihydroxyphenazine + CO2 + NAD(+) + H2O. It carries out the reaction phenazine-1-carboxylate + NADH + O2 + 2 H(+) = 1-hydroxyphenazine + CO2 + NAD(+) + H2O. Its function is as follows. Involved in the biosynthesis of phenazine natural products including myxin, an N(5),N(10)-dioxide phenazine antiobiotic, which has antimicrobial activity. Catalyzes the decarboxylative hydroxylations of phenazine 1,6-dicarboxylic acid (PDC) to produce 1,6-dihydroxyphenazine (DHP). Low activity with phenazine 1-carboxylic acid (PCA) to produce 1-hydroxyphenazine. The chain is Phenazine 1,6-dicarboxylic acid hydroxylase PhzS from Lysobacter antibioticus.